Consider the following 339-residue polypeptide: MDLINSSTHVINVSTSLTNSTGVPTPAPKTIIAASLFMAFIIGVISNGLYLWMLQFKMQRTVNTLLFFHLILSYFISTLILPFMATSFLQDNHWVFGSVLCKAFNSTLSVSMFASVFFLSAISVARYYLILHPVWSQQHRTPHWASRIALQIWISATILSIPYLVFRTTHDDHKGRIKCQNNYIVSTDWESKEHQTLGQWIHAACFVGRFLLGFLLPFLVIIFCYKRVATKMKEKGLFKSSKPFKVMVTAVISFFVCWMPYHVHSGLVLTKSQPLPLHLTLGLAVVTISFNTVVSPVLYLFTGENFKVFKKSILALFNSTFSDISSTERTQTLNSETEI.

The Extracellular portion of the chain corresponds to 1 to 30; that stretch reads MDLINSSTHVINVSTSLTNSTGVPTPAPKT. N-linked (GlcNAc...) asparagine glycans are attached at residues Asn5, Asn12, and Asn19. The chain crosses the membrane as a helical span at residues 31–53; it reads IIAASLFMAFIIGVISNGLYLWM. At 54–64 the chain is on the cytoplasmic side; sequence LQFKMQRTVNT. The helical transmembrane segment at 65-86 threads the bilayer; the sequence is LLFFHLILSYFISTLILPFMAT. Topologically, residues 87–103 are extracellular; it reads SFLQDNHWVFGSVLCKA. Residues Cys101 and Cys179 are joined by a disulfide bond. The chain crosses the membrane as a helical span at residues 104–124; sequence FNSTLSVSMFASVFFLSAISV. Residues 125–143 are Cytoplasmic-facing; it reads ARYYLILHPVWSQQHRTPH. Residues 144 to 165 traverse the membrane as a helical segment; the sequence is WASRIALQIWISATILSIPYLV. Residues 166–209 are Extracellular-facing; sequence FRTTHDDHKGRIKCQNNYIVSTDWESKEHQTLGQWIHAACFVGR. A helical transmembrane segment spans residues 210 to 230; that stretch reads FLLGFLLPFLVIIFCYKRVAT. The Cytoplasmic portion of the chain corresponds to 231-246; sequence KMKEKGLFKSSKPFKV. A helical membrane pass occupies residues 247-268; sequence MVTAVISFFVCWMPYHVHSGLV. Over 269 to 283 the chain is Extracellular; the sequence is LTKSQPLPLHLTLGL. Residues 284–303 form a helical membrane-spanning segment; that stretch reads AVVTISFNTVVSPVLYLFTG. The Cytoplasmic portion of the chain corresponds to 304–339; the sequence is ENFKVFKKSILALFNSTFSDISSTERTQTLNSETEI.

It belongs to the G-protein coupled receptor 1 family. In terms of tissue distribution, expressed predominantly in lung, spleen and testis.

Its subcellular location is the cell membrane. Its function is as follows. Orphan receptor; could be a chemoattractant receptor. This chain is Probable G-protein coupled receptor 33 (Gpr33), found in Mus musculus (Mouse).